The following is a 431-amino-acid chain: Glutamate-1-semialdehyde 2,1-aminomutase 1 (431 aa).

N6-(pyridoxal phosphate)lysine is present on Lys268.

Belongs to the class-III pyridoxal-phosphate-dependent aminotransferase family. HemL subfamily. Homodimer. It depends on pyridoxal 5'-phosphate as a cofactor.

The protein localises to the cytoplasm. It carries out the reaction (S)-4-amino-5-oxopentanoate = 5-aminolevulinate. It functions in the pathway porphyrin-containing compound metabolism; protoporphyrin-IX biosynthesis; 5-aminolevulinate from L-glutamyl-tRNA(Glu): step 2/2. In Anoxybacillus flavithermus (strain DSM 21510 / WK1), this protein is Glutamate-1-semialdehyde 2,1-aminomutase 1.